We begin with the raw amino-acid sequence, 95 residues long: Acylphosphatase (95 aa).

One can recognise an Acylphosphatase-like domain in the interval 7 to 93 (TWQLFAHGRV…QLFDRFDWLP (87 aa)). Catalysis depends on residues arginine 22 and asparagine 40.

Belongs to the acylphosphatase family.

It catalyses the reaction an acyl phosphate + H2O = a carboxylate + phosphate + H(+). This Cupriavidus metallidurans (strain ATCC 43123 / DSM 2839 / NBRC 102507 / CH34) (Ralstonia metallidurans) protein is Acylphosphatase (acyP).